The sequence spans 503 residues: Lysine--tRNA ligase (503 aa).

Residues Glu-413 and Glu-420 each coordinate Mg(2+).

It belongs to the class-II aminoacyl-tRNA synthetase family. In terms of assembly, homodimer. Mg(2+) serves as cofactor.

The protein localises to the cytoplasm. It catalyses the reaction tRNA(Lys) + L-lysine + ATP = L-lysyl-tRNA(Lys) + AMP + diphosphate. This Mannheimia succiniciproducens (strain KCTC 0769BP / MBEL55E) protein is Lysine--tRNA ligase.